Reading from the N-terminus, the 952-residue chain is RNA polymerase-associated protein RapA (952 aa).

Residues 164-334 (EVGRRYAPRV…FARLRLLDPD (171 aa)) form the Helicase ATP-binding domain. 177-184 (DEVGLGKT) is an ATP binding site. Positions 280–283 (DEAH) match the DEAH box motif. In terms of domain architecture, Helicase C-terminal spans 492–668 (RVNWLLELLK…GKSDGLESLI (177 aa)).

Belongs to the SNF2/RAD54 helicase family. RapA subfamily. Interacts with the RNAP. Has a higher affinity for the core RNAP than for the holoenzyme. Its ATPase activity is stimulated by binding to RNAP.

Functionally, transcription regulator that activates transcription by stimulating RNA polymerase (RNAP) recycling in case of stress conditions such as supercoiled DNA or high salt concentrations. Probably acts by releasing the RNAP, when it is trapped or immobilized on tightly supercoiled DNA. Does not activate transcription on linear DNA. Probably not involved in DNA repair. The protein is RNA polymerase-associated protein RapA of Aliivibrio fischeri (strain ATCC 700601 / ES114) (Vibrio fischeri).